The chain runs to 260 residues: MVLIRVLANLLILQLSYAQKASELVIGGDECNINEHRSLVVLFNSSGFLCAGTLINQEWVLTAANCDRKNIRIKLGMHSKNVTNEDEQTRVPKRSTFVSVAKTSHQTLGTRTSMLIRLKRPVNDSPHIAPLSLPSSPPSVGSVCRVMGWGTISPTKVSYPDVPHCANINLLDYEVCREAHGGLPATSRTLCAGILEGGKDSCQGDSGGPLICNGQFQGILSWGVHPCGQPHKPGVYTKVSDYSEWIQSIIAGNTDVTCPP.

Positions 1 to 18 (MVLIRVLANLLILQLSYA) are cleaved as a signal peptide. Positions 19–24 (QKASEL) are excised as a propeptide. The region spanning 25-251 (VIGGDECNIN…YSEWIQSIIA (227 aa)) is the Peptidase S1 domain. 5 cysteine pairs are disulfide-bonded: cysteine 31-cysteine 165, cysteine 50-cysteine 66, cysteine 144-cysteine 212, cysteine 176-cysteine 191, and cysteine 202-cysteine 227. N-linked (GlcNAc...) asparagine glycosylation is present at asparagine 44. N-linked (GlcNAc...) asparagine glycosylation is present at asparagine 81.

This sequence belongs to the peptidase S1 family. Snake venom subfamily. As to quaternary structure, monomer. As to expression, expressed by the venom gland.

It is found in the secreted. With respect to regulation, inhibited by benzamidine and partially inhibited by EDTA. Thrombin-like snake venom serine protease that induces blood clotting in vitro, defibrinogenation in vivo (by intraperitoneal injection into mice), albuminolytic and fibrinogenolytic activities. Preferentially cleaves the alpha chain of fibrinogen (FGA). Causes hemolysis in the heart, causes apparent hyperemia and lymphocytic interstitial pneumonitis in the lung, causes necrosis and inflammatory infiltrate in the liver, and causes glomerular congestion in the kidney. Also provokes a drastic myonecrosis. The protein is Thrombin-like enzyme bhalternin of Bothrops alternatus (Urutu).